A 612-amino-acid chain; its full sequence is uncharacterized protein (612 aa).

The tract at residues 213 to 238 (ASAEDGEEAAAGAGKRQVARSGARKR) is disordered. Residues 421–610 (DLACLLLADL…ERLLQLYRRL (190 aa)) form the VWFA domain.

Its subcellular location is the cytoplasm. Functionally, component of the anaerobic respiratory chain that transforms nitrate to dinitrogen (denitrification). Function unknown, but essential for the denitrification process. This is an uncharacterized protein from Pseudomonas aeruginosa (strain ATCC 15692 / DSM 22644 / CIP 104116 / JCM 14847 / LMG 12228 / 1C / PRS 101 / PAO1).